Here is a 360-residue protein sequence, read N- to C-terminus: Aminomethyltransferase (360 aa).

Belongs to the GcvT family. The glycine cleavage system is composed of four proteins: P, T, L and H.

It carries out the reaction N(6)-[(R)-S(8)-aminomethyldihydrolipoyl]-L-lysyl-[protein] + (6S)-5,6,7,8-tetrahydrofolate = N(6)-[(R)-dihydrolipoyl]-L-lysyl-[protein] + (6R)-5,10-methylene-5,6,7,8-tetrahydrofolate + NH4(+). Its function is as follows. The glycine cleavage system catalyzes the degradation of glycine. The protein is Aminomethyltransferase of Exiguobacterium sibiricum (strain DSM 17290 / CCUG 55495 / CIP 109462 / JCM 13490 / 255-15).